The chain runs to 357 residues: Chorismate synthase (357 aa).

Arg-47 provides a ligand contact to NADP(+). FMN-binding positions include 123–125, Gly-281, 296–300, and Arg-324; these read RAS and KPTSS.

Belongs to the chorismate synthase family. As to quaternary structure, homotetramer. Requires FMNH2 as cofactor.

The catalysed reaction is 5-O-(1-carboxyvinyl)-3-phosphoshikimate = chorismate + phosphate. The protein operates within metabolic intermediate biosynthesis; chorismate biosynthesis; chorismate from D-erythrose 4-phosphate and phosphoenolpyruvate: step 7/7. Its function is as follows. Catalyzes the anti-1,4-elimination of the C-3 phosphate and the C-6 proR hydrogen from 5-enolpyruvylshikimate-3-phosphate (EPSP) to yield chorismate, which is the branch point compound that serves as the starting substrate for the three terminal pathways of aromatic amino acid biosynthesis. This reaction introduces a second double bond into the aromatic ring system. The protein is Chorismate synthase of Chlamydia trachomatis serovar D (strain ATCC VR-885 / DSM 19411 / UW-3/Cx).